A 507-amino-acid chain; its full sequence is Glutamate--tRNA ligase (507 aa).

The 'HIGH' region motif lies at 14–24 (PSPTGYLHIGG). The 'KMSKS' region signature appears at 261 to 265 (KLSKR). An ATP-binding site is contributed by Lys-264.

The protein belongs to the class-I aminoacyl-tRNA synthetase family. Glutamate--tRNA ligase type 1 subfamily. In terms of assembly, monomer.

The protein localises to the cytoplasm. The catalysed reaction is tRNA(Glu) + L-glutamate + ATP = L-glutamyl-tRNA(Glu) + AMP + diphosphate. Functionally, catalyzes the attachment of glutamate to tRNA(Glu) in a two-step reaction: glutamate is first activated by ATP to form Glu-AMP and then transferred to the acceptor end of tRNA(Glu). In Roseiflexus castenholzii (strain DSM 13941 / HLO8), this protein is Glutamate--tRNA ligase.